The primary structure comprises 266 residues: Type II iodothyronine deiodinase (266 aa).

Over 1 to 9 (MGLLSVDLL) the chain is Lumenal. A helical; Signal-anchor for type III membrane protein transmembrane segment spans residues 10 to 34 (ITLQILPVFFSNCLFLALYDSVILL). At 35-266 (KHVALLLSRS…KNFSKRUILD (232 aa)) the chain is on the cytoplasmic side. Residue selenocysteine 130 is part of the active site. Non-standard amino acids (selenocysteine) are located at selenocysteine 130 and selenocysteine 263.

Belongs to the iodothyronine deiodinase family. As to quaternary structure, predominantly monomer. Can form homodimers but homodimerization is not essential for enzyme activity. Interacts with USP20 and USP33. Interacts with MARCHF6. In terms of processing, ubiquitinated by MARCHF6, leading to its degradation by the proteasome. Deubiquitinated by USP20 and USP33. As to expression, expressed in cerebral cortex, cerebellum, pituitary gland, mostly in anterior pituitary gland, and pineal gland, as well as in brown adipose tissue (BAT).

The protein resides in the endoplasmic reticulum membrane. The enzyme catalyses 3,3',5-triiodo-L-thyronine + iodide + A + H(+) = L-thyroxine + AH2. The catalysed reaction is 3,3'-diiodo-L-thyronine + iodide + A + H(+) = 3,3',5'-triiodo-L-thyronine + AH2. It catalyses the reaction 3'-iodo-L-thyronine + iodide + A + H(+) = 3',5'-diiodo-L-thyronine + AH2. It carries out the reaction 3,3'-diiodothyronamine + iodide + A + H(+) = 3,3',5'-triiodothyronamine + AH2. The enzyme catalyses 3'-iodothyronamine + iodide + A + H(+) = 3',5'-diiodothyronamine + AH2. Plays a crucial role in the metabolism of thyroid hormones (TH) and has specific roles in TH activation and inactivation by deiodination. Catalyzes the deiodination of L-thyroxine (T4) to 3,5,3'-triiodothyronine (T3) and 3',5'-diiodothyronine (3',5'-T2) to 3'-monoiodothyronine (3'-T1) via outer-ring deiodination (ORD). Catalyzes the deiodination of 3,3',5'-triiodothyronine (rT3) to 3,3'-diiodothyronine (3,3'-T2) via ORD. Catalyzes the phenolic ring deiodinations of 3,3',5'-triiodothyronamine and 3',5'- diiodothyronamine. The polypeptide is Type II iodothyronine deiodinase (Dio2) (Rattus norvegicus (Rat)).